Here is a 23-residue protein sequence, read N- to C-terminus: Cytochrome c oxidase subunit 7A-liver, mitochondrial (23 aa).

The protein belongs to the cytochrome c oxidase VIIa family. Component of the cytochrome c oxidase (complex IV, CIV), a multisubunit enzyme composed of 14 subunits. The complex is composed of a catalytic core of 3 subunits MT-CO1, MT-CO2 and MT-CO3, encoded in the mitochondrial DNA, and 11 supernumerary subunits COX4I, COX5A, COX5B, COX6A, COX6B, COX6C, COX7A, COX7B, COX7C, COX8 and NDUFA4, which are encoded in the nuclear genome. The complex exists as a monomer or a dimer and forms supercomplexes (SCs) in the inner mitochondrial membrane with NADH-ubiquinone oxidoreductase (complex I, CI) and ubiquinol-cytochrome c oxidoreductase (cytochrome b-c1 complex, complex III, CIII), resulting in different assemblies (supercomplex SCI(1)III(2)IV(1) and megacomplex MCI(2)III(2)IV(2)).

Its subcellular location is the mitochondrion inner membrane. It functions in the pathway energy metabolism; oxidative phosphorylation. In terms of biological role, component of the cytochrome c oxidase, the last enzyme in the mitochondrial electron transport chain which drives oxidative phosphorylation. The respiratory chain contains 3 multisubunit complexes succinate dehydrogenase (complex II, CII), ubiquinol-cytochrome c oxidoreductase (cytochrome b-c1 complex, complex III, CIII) and cytochrome c oxidase (complex IV, CIV), that cooperate to transfer electrons derived from NADH and succinate to molecular oxygen, creating an electrochemical gradient over the inner membrane that drives transmembrane transport and the ATP synthase. Cytochrome c oxidase is the component of the respiratory chain that catalyzes the reduction of oxygen to water. Electrons originating from reduced cytochrome c in the intermembrane space (IMS) are transferred via the dinuclear copper A center (CU(A)) of subunit 2 and heme A of subunit 1 to the active site in subunit 1, a binuclear center (BNC) formed by heme A3 and copper B (CU(B)). The BNC reduces molecular oxygen to 2 water molecules using 4 electrons from cytochrome c in the IMS and 4 protons from the mitochondrial matrix. The protein is Cytochrome c oxidase subunit 7A-liver, mitochondrial of Oncorhynchus mykiss (Rainbow trout).